A 251-amino-acid polypeptide reads, in one-letter code: Hydroxyacylglutathione hydrolase (251 aa).

Zn(2+) contacts are provided by His-53, His-55, Asp-57, His-58, His-110, Asp-127, and His-165.

The protein belongs to the metallo-beta-lactamase superfamily. Glyoxalase II family. Monomer. Requires Zn(2+) as cofactor.

The enzyme catalyses an S-(2-hydroxyacyl)glutathione + H2O = a 2-hydroxy carboxylate + glutathione + H(+). Its pathway is secondary metabolite metabolism; methylglyoxal degradation; (R)-lactate from methylglyoxal: step 2/2. Functionally, thiolesterase that catalyzes the hydrolysis of S-D-lactoyl-glutathione to form glutathione and D-lactic acid. The chain is Hydroxyacylglutathione hydrolase from Shigella dysenteriae serotype 1 (strain Sd197).